Consider the following 1221-residue polypeptide: A disintegrin and metalloproteinase with thrombospondin motifs 18 (1221 aa).

The signal sequence occupies residues 1-47 (MECALLLACAFPAAGSGPPRGLAGLGRVAKALQLCCLCCASVAAALA). Positions 48–284 (SDSSSGASGL…EYGSSGRPRR (237 aa)) are excised as a propeptide. Residues Asn151 and Asn190 are each glycosylated (N-linked (GlcNAc...) asparagine). Residues 252-259 (HFCGRRKK) carry the Cysteine switch motif. Cys254 is a binding site for Zn(2+). A disordered region spans residues 258–291 (KKYAPKPPTEDTYLRFDEYGSSGRPRRSAGKSQK). Over residues 265–275 (PTEDTYLRFDE) the composition is skewed to basic and acidic residues. Positions 293 to 498 (LNVETLVVAD…PQAGCLVDEP (206 aa)) constitute a Peptidase M12B domain. An N-linked (GlcNAc...) asparagine glycan is attached at Asn313. Cystine bridges form between Cys369–Cys420, Cys395–Cys402, Cys414–Cys493, Cys453–Cys477, Cys521–Cys546, Cys532–Cys553, Cys541–Cys572, Cys566–Cys577, Cys601–Cys638, Cys605–Cys643, and Cys616–Cys628. His436 contacts Zn(2+). The active site involves Glu437. Positions 440 and 446 each coordinate Zn(2+). Residues 498–577 (PKQAGQYKYP…LSMWCRQGQC (80 aa)) enclose the Disintegrin domain. The TSP type-1 1 domain occupies 589-644 (HGQWSAWSKWSECSRTCGGGVKFQERHCNNPKPQYGGLFCPGSSRIYQLCNINPCN). N-linked (GlcNAc...) asparagine glycans are attached at residues Asn745, Asn838, and Asn909. The interval 750-876 (FYKGLYLNQH…TPPATKRPAY (127 aa)) is spacer. TSP type-1 domains lie at 931 to 990 (CPAY…NSHA), 991 to 1049 (CPPQ…GRCP), 1052 to 1116 (SRLQ…RACP), and 1123 to 1178 (MVAG…NFCP). The region spanning 1184-1221 (EDPSCVDFFNWCHLVPQHGVCNHKFYGKQCCKSCTRKI) is the PLAC domain.

Requires Zn(2+) as cofactor. Post-translationally, the precursor is cleaved by a furin endopeptidase. In terms of processing, glycosylated. Can be O-fucosylated by POFUT2 on a serine or a threonine residue found within the consensus sequence C1-X(2)-(S/T)-C2-G of the TSP type-1 repeat domains where C1 and C2 are the first and second cysteine residue of the repeat, respectively. Fucosylated repeats can then be further glycosylated by the addition of a beta-1,3-glucose residue by the glucosyltransferase, B3GALTL. Fucosylation mediates the efficient secretion of ADAMTS family members. Can also be C-glycosylated with one or two mannose molecules on tryptophan residues within the consensus sequence W-X-X-W of the TPRs, and N-glycosylated. These other glycosylations can also facilitate secretion. In terms of tissue distribution, expressed in fetal lung, liver, and kidney and in adult brain, prostate, submaxillary gland, and endothelium.

Its subcellular location is the secreted. The protein localises to the extracellular space. The protein resides in the extracellular matrix. The protein is A disintegrin and metalloproteinase with thrombospondin motifs 18 (ADAMTS18) of Homo sapiens (Human).